Here is a 375-residue protein sequence, read N- to C-terminus: Porin Omp2b (375 aa).

Residues methionine 1–alanine 22 form the signal peptide.

Belongs to the alphaproteobacteria porin family. In terms of assembly, homotrimer.

Its subcellular location is the cell outer membrane. Forms passive diffusion pores that allow small molecular weight hydrophilic materials across the outer membrane. The sequence is that of Porin Omp2b (omp2b) from Brucella suis.